Here is a 429-residue protein sequence, read N- to C-terminus: Cyclin-B2-2 (429 aa).

Positions 66-98 are disordered; that stretch reads SQRKQESCDKKKLDSLHPSISRSQEETKKLKPS. A compositionally biased stretch (basic and acidic residues) spans 68 to 80; that stretch reads RKQESCDKKKLDS.

The protein belongs to the cyclin family. Cyclin AB subfamily. Interacts with CDC20-1 and CDC20-2. In terms of tissue distribution, expressed in roots.

The sequence is that of Cyclin-B2-2 (CYCB2-2) from Arabidopsis thaliana (Mouse-ear cress).